The chain runs to 94 residues: Protein SKIP34 (94 aa).

A disordered region spans residues 1–27; sequence MCYGHNQSLSSRSSLRRRSHDGEDDSV. Positions 23–61 form a coiled coil; sequence EDDSVVDDLRDRLAETEARLRRARAREAELSRRLEHMKR.

Interacts with SPK1B/ASK2.

The sequence is that of Protein SKIP34 (SKIP34) from Arabidopsis thaliana (Mouse-ear cress).